The primary structure comprises 682 residues: Kinesin-like protein KIF2A (682 aa).

Residues 1-192 form a globular region; sequence MVTSLNEDSE…LDYRPLTTSD (192 aa). Residues 39–129 are disordered; sequence LAPDEEIDPG…GKKDFGLASR (91 aa). Polar residues predominate over residues 99 to 115; the sequence is IEQSASRQQNGSVSDIS. Residues 198-528 form the Kinesin motor domain; the sequence is RICVCVRKRP…LRYANRVKEL (331 aa). 288–295 contacts ATP; the sequence is GQTGSGKT. A coiled-coil region spans residues 638–673; that stretch reads QLEAILEKKIDILTELRDKVKSFRAALQEEEHASKQ.

It belongs to the TRAFAC class myosin-kinesin ATPase superfamily. Kinesin family. MCAK/KIF2 subfamily. As to quaternary structure, interacts with aurka and plk1. In terms of processing, phosphorylation by plk1 promotes location at spindle microtubules and spindle poles, and enhances its microtubule depolymerization activity. Post-translationally, phosphorylation by AURKA interferes with location at spindle microtubules and spindle poles, and inhibits its microtubule depolymerization activity.

It localises to the cytoplasm. It is found in the cytoskeleton. The protein resides in the microtubule organizing center. The protein localises to the centrosome. Its subcellular location is the spindle pole. It localises to the spindle. Its function is as follows. Plus end-directed microtubule-dependent motor. May regulate microtubule dynamics during axonal growth. Required for normal progression through mitosis. Required for normal congress of chromosomes at the metaphase plate. Required for normal spindle dynamics during mitosis. Promotes spindle turnover. Implicated in formation of bipolar mitotic spindles Has microtubule depolymerization activity. This Xenopus laevis (African clawed frog) protein is Kinesin-like protein KIF2A (kif2a).